Consider the following 497-residue polypeptide: Probable cytosol aminopeptidase (497 aa).

Mn(2+) contacts are provided by Lys-263 and Asp-268. Residue Lys-275 is part of the active site. Mn(2+) contacts are provided by Asp-286, Asp-345, and Glu-347. Arg-349 is an active-site residue.

It belongs to the peptidase M17 family. The cofactor is Mn(2+).

Its subcellular location is the cytoplasm. The enzyme catalyses Release of an N-terminal amino acid, Xaa-|-Yaa-, in which Xaa is preferably Leu, but may be other amino acids including Pro although not Arg or Lys, and Yaa may be Pro. Amino acid amides and methyl esters are also readily hydrolyzed, but rates on arylamides are exceedingly low.. The catalysed reaction is Release of an N-terminal amino acid, preferentially leucine, but not glutamic or aspartic acids.. In terms of biological role, presumably involved in the processing and regular turnover of intracellular proteins. Catalyzes the removal of unsubstituted N-terminal amino acids from various peptides. The chain is Probable cytosol aminopeptidase from Methylorubrum extorquens (strain CM4 / NCIMB 13688) (Methylobacterium extorquens).